Reading from the N-terminus, the 96-residue chain is Protein RnfH (96 aa).

The protein belongs to the UPF0125 (RnfH) family.

The protein is Protein RnfH of Cronobacter sakazakii (strain ATCC BAA-894) (Enterobacter sakazakii).